Consider the following 348-residue polypeptide: Putative agmatine deiminase (348 aa).

Residue cysteine 335 is the Amidino-cysteine intermediate of the active site.

It belongs to the agmatine deiminase family.

The catalysed reaction is agmatine + H2O = N-carbamoylputrescine + NH4(+). In Legionella pneumophila subsp. pneumophila (strain Philadelphia 1 / ATCC 33152 / DSM 7513), this protein is Putative agmatine deiminase.